Here is a 732-residue protein sequence, read N- to C-terminus: Prolyl tripeptidyl peptidase (732 aa).

The first 24 residues, 1-24 (MKKTIFQQLFLSVCALTVALPCSA), serve as a signal peptide directing secretion. Catalysis depends on charge relay system residues S603, D678, and H710.

Belongs to the peptidase S9B family. The N-terminus is blocked.

It carries out the reaction Hydrolysis of Xaa-Xaa-Pro-|-Yaa- releasing the N-terminal tripeptide of a peptide with Pro as the third residue (position P1) and where Yaa is not proline.. Strongly inhibited by diisopropyl fluorophosphate and Pefabloc. Weakly inhibited by 3,4-dichloroisocumarin. Not inhibited by phenylmethylsulfonyl fluoride, leupeptin, antipain or prolinal. Activated by iodoacetamide. Its function is as follows. Serine proteinase. Releases tripeptides from the free amino terminus of proteins. Has a requirement for Pro in the P1 position, but is inactivated by Pro in the P1' position. The sequence is that of Prolyl tripeptidyl peptidase from Porphyromonas gingivalis (strain ATCC BAA-308 / W83).